A 385-amino-acid polypeptide reads, in one-letter code: 6-hydroxynicotinate 3-monooxygenase (385 aa).

A signal peptide spans 1 to 20; that stretch reads MSQSPRIAVVGAGLGGAAAA. FAD contacts are provided by residues Gly15, 34–35, His47, Arg108, and Leu130; that span reads EQ. The active-site Proton acceptor is His47. The active-site Proton acceptor is the Tyr215. Residues Asp294 and 307–308 each bind FAD; that span reads AA.

This sequence belongs to the 6-hydroxynicotinate 3-monooxygenase family. Monomer. FAD is required as a cofactor.

The enzyme catalyses 6-hydroxynicotinate + NADH + O2 + 2 H(+) = 2,5-dihydroxypyridine + CO2 + NAD(+) + H2O. Its activity is regulated as follows. Inhibited competitively by nicotinic acid with a Ki of 0.49 mM. Inhibited by thiol-specific compounds p-chloromercuribenzoate, DTNB, Ag(2)SO(4), HgCl(2), CuCl(2) and N-ethylmaleimide. No inhibition by o-phenanthroline, 8-hydroxyquinoline, EDTA, disodium 4,5-dihydroxy-m-benzenedisulfonate, fluoride, azide, KCl, LiCl, NaCl, BaCl(2), MnCl(2), MgCl(2), PBCl, ZnCl(2), CoCl(2), SnCl(2), FeSO(4), FeCl(3), NiCl(2), CdCl(2), AlCl(3), iodoacetic acid, hydro-xylamine, phenylhydrazine, semicarbazide, cysteamine, alpha,alpha-dipyridyl and urea. Functionally, flavin-dependent monooxygenase (FMO) that catalyzes the decarboxylative hydroxylation of 6-hydroxynicotinic acid (6-HNA) to 2,5-dihydroxypyridine (2,5-DHP) with concomitant oxidation of NADH, a step in the aerobic nicotinate degradation pathway. Uses NADH in preference to NADPH as an electron donor. The chain is 6-hydroxynicotinate 3-monooxygenase (nicC) from Pseudomonas fluorescens.